Here is a 351-residue protein sequence, read N- to C-terminus: Beta-hexosaminidase (351 aa).

Substrate is bound by residues Asp-62, Arg-70, Arg-134, and 164–165 (KH). The active-site Proton donor/acceptor is the His-177. Residue Asp-249 is the Nucleophile of the active site.

Belongs to the glycosyl hydrolase 3 family. NagZ subfamily. As to quaternary structure, monomer.

It localises to the cytoplasm. The catalysed reaction is Hydrolysis of terminal non-reducing N-acetyl-D-hexosamine residues in N-acetyl-beta-D-hexosaminides.. The protein operates within cell wall biogenesis; peptidoglycan recycling. Plays a role in peptidoglycan recycling by cleaving the terminal beta-1,4-linked N-acetylglucosamine (GlcNAc) from peptide-linked peptidoglycan fragments, giving rise to free GlcNAc, anhydro-N-acetylmuramic acid and anhydro-N-acetylmuramic acid-linked peptides. The chain is Beta-hexosaminidase from Pasteurella multocida (strain Pm70).